The sequence spans 65 residues: DNA-directed RNA polymerase subunit Rpo10 (65 aa).

Residues Cys7, Cys10, Cys44, and Cys45 each contribute to the Zn(2+) site.

Belongs to the archaeal Rpo10/eukaryotic RPB10 RNA polymerase subunit family. Part of the RNA polymerase complex. Zn(2+) serves as cofactor.

Its subcellular location is the cytoplasm. It localises to the chromosome. It carries out the reaction RNA(n) + a ribonucleoside 5'-triphosphate = RNA(n+1) + diphosphate. Functionally, DNA-dependent RNA polymerase (RNAP) catalyzes the transcription of DNA into RNA using the four ribonucleoside triphosphates as substrates. This is DNA-directed RNA polymerase subunit Rpo10 from Thermococcus kodakarensis (strain ATCC BAA-918 / JCM 12380 / KOD1) (Pyrococcus kodakaraensis (strain KOD1)).